Here is a 381-residue protein sequence, read N- to C-terminus: tRNA pseudouridine synthase D (381 aa).

The active-site Nucleophile is aspartate 81. Residues 160-335 (GMPNYFGSQR…TLGSRRFFWV (176 aa)) form the TRUD domain.

This sequence belongs to the pseudouridine synthase TruD family.

It catalyses the reaction uridine(13) in tRNA = pseudouridine(13) in tRNA. In terms of biological role, responsible for synthesis of pseudouridine from uracil-13 in transfer RNAs. The sequence is that of tRNA pseudouridine synthase D from Helicobacter pylori (strain HPAG1).